The chain runs to 429 residues: Enolase (429 aa).

Glutamine 162 contributes to the (2R)-2-phosphoglycerate binding site. The Proton donor role is filled by glutamate 204. Mg(2+) contacts are provided by aspartate 241, glutamate 282, and aspartate 309. Lysine 334, arginine 363, serine 364, and lysine 385 together coordinate (2R)-2-phosphoglycerate. Lysine 334 serves as the catalytic Proton acceptor.

The protein belongs to the enolase family. Mg(2+) serves as cofactor.

Its subcellular location is the cytoplasm. The protein resides in the secreted. It is found in the cell surface. The catalysed reaction is (2R)-2-phosphoglycerate = phosphoenolpyruvate + H2O. It participates in carbohydrate degradation; glycolysis; pyruvate from D-glyceraldehyde 3-phosphate: step 4/5. In terms of biological role, catalyzes the reversible conversion of 2-phosphoglycerate (2-PG) into phosphoenolpyruvate (PEP). It is essential for the degradation of carbohydrates via glycolysis. The sequence is that of Enolase from Acidothermus cellulolyticus (strain ATCC 43068 / DSM 8971 / 11B).